The sequence spans 608 residues: Ceramide kinase (608 aa).

Positions 160–367 (ERPRNLLVFV…LDAMQVVRWK (208 aa)) constitute a DAGKc domain. Residues 170–174 (HPKSG), Thr-201, and 230–236 (GDGFFNE) each bind ATP. Residue 229-232 (GGDG) coordinates substrate. The active-site Proton donor/acceptor is the Asp-231. The tract at residues 254-280 (PSDSFNSVQSRGSSSVPEPGDEVHETD) is disordered. Polar residues predominate over residues 255 to 269 (SDSFNSVQSRGSSSV). Ser-329 is an ATP binding site.

It depends on Ca(2+) as a cofactor.

It catalyses the reaction an N-acylsphing-4-enine + ATP = an N-acylsphing-4-enine 1-phosphate + ADP + H(+). Catalyzes specifically the phosphorylation of ceramide to form ceramide 1-phosphate. Possesses high activity on ceramide analogs (C6, C8 synthetic ceramides) and lower activity on C6 and C8 dihydroceramides. Has weak activity on natural ceramides (a mixture of ceramides from bovine brain) and the synthetic substrate C2 ceramide. Has very poor activity on diacylglycerol and sphingosine. Ceramide is a critical sphingolipid metabolite that induces programmed cell death (PCD) in plants and ceramide-1-phosphate has a PCD suppressive effect. Thus, ceramide phosphorylation plays a role in the modulation of PCD and CERK activity is crucial for the maintenance of cell viability. This chain is Ceramide kinase (CERK), found in Arabidopsis thaliana (Mouse-ear cress).